A 330-amino-acid polypeptide reads, in one-letter code: Cytoskeleton protein RodZ (330 aa).

Topologically, residues 1–111 are cytoplasmic; the sequence is MNTEATQDHQ…LGKRRKKRDG (111 aa). The HTH cro/C1-type domain occupies 19 to 71; sequence LRHAREQLGLSQQAVAERLCLKVSTVRDIEDDKAPADLASTFLRGYIRSYARL. A DNA-binding region (H-T-H motif) is located at residues 30 to 49; the sequence is QQAVAERLCLKVSTVRDIED. Residues 112–132 form a helical; Signal-anchor for type II membrane protein membrane-spanning segment; it reads WLMSFTWLVLFVVIGLSGAWW. Over 133-330 the chain is Periplasmic; it reads WQDHKAQQEE…TLNAEQSPAQ (198 aa). A compositionally biased stretch (polar residues) spans 146 to 166; it reads MADQSSAELNGGDANSQNVPL. The tract at residues 146–237 is disordered; sequence MADQSSAELN…ASPLPTDQAN (92 aa). Composition is skewed to low complexity over residues 176–202 and 216–233; these read TDSA…TPAD and TAGT…PLPT.

It belongs to the RodZ family.

It is found in the cell inner membrane. Its function is as follows. Cytoskeletal protein that is involved in cell-shape control through regulation of the length of the long axis. The protein is Cytoskeleton protein RodZ of Klebsiella pneumoniae (strain 342).